The primary structure comprises 78 residues: Small ribosomal subunit protein bS16 (78 aa).

This sequence belongs to the bacterial ribosomal protein bS16 family.

This is Small ribosomal subunit protein bS16 from Thermodesulfovibrio yellowstonii (strain ATCC 51303 / DSM 11347 / YP87).